Consider the following 241-residue polypeptide: Triosephosphate isomerase (241 aa).

Residue 9–11 (NWK) participates in substrate binding. The active-site Electrophile is the H96. E165 (proton acceptor) is an active-site residue. Residues G171, S204, and 225-226 (GG) each bind substrate.

It belongs to the triosephosphate isomerase family. As to quaternary structure, homodimer.

It is found in the cytoplasm. It catalyses the reaction D-glyceraldehyde 3-phosphate = dihydroxyacetone phosphate. It participates in carbohydrate biosynthesis; gluconeogenesis. The protein operates within carbohydrate degradation; glycolysis; D-glyceraldehyde 3-phosphate from glycerone phosphate: step 1/1. Functionally, involved in the gluconeogenesis. Catalyzes stereospecifically the conversion of dihydroxyacetone phosphate (DHAP) to D-glyceraldehyde-3-phosphate (G3P). This chain is Triosephosphate isomerase, found in Trichodesmium erythraeum (strain IMS101).